Reading from the N-terminus, the 859-residue chain is Protein FAM171A1 (859 aa).

A signal peptide spans 1–20 (MSGSTAVALLFCVLSCSVWG). The Extracellular portion of the chain corresponds to 21-307 (AGSKASHEHN…VTQDITSYHT (287 aa)). Residues Asn163, Asn194, and Asn198 are each glycosylated (N-linked (GlcNAc...) asparagine). A helical transmembrane segment spans residues 308-328 (IFLLAILGGIAFILLVLLCIL). Over 329-859 (LYYCRRKCLK…ERPLLAFNKK (531 aa)) the chain is Cytoplasmic. Disordered stretches follow at residues 397 to 421 (SRDFGSREELLSHQEEKSRMSLDNL), 484 to 509 (TNHVTAGSKPNIQEQMHPVPSAPEPE), and 771 to 859 (QSPS…FNKK). Basic and acidic residues predominate over residues 400 to 416 (FGSREELLSHQEEKSRM). Polar residues-rich tracts occupy residues 484–497 (TNHVTAGSKPNIQE) and 797–806 (SGSQTPSLQE). Positions 838 to 852 (GENKKSPWQKREERP) are enriched in basic and acidic residues.

The protein belongs to the FAM171 family.

The protein localises to the cell membrane. Functionally, may be involved in the regulation of the cytoskeletal dynamics, plays a role in actin stress fiber formation. This chain is Protein FAM171A1 (fam171a1), found in Xenopus laevis (African clawed frog).